The following is a 385-amino-acid chain: Deoxyguanosinetriphosphate triphosphohydrolase-like protein (385 aa).

Positions 75–204 constitute an HD domain; sequence RLTHSLEVAQ…INFADEIAYN (130 aa).

The protein belongs to the dGTPase family. Type 2 subfamily.

The sequence is that of Deoxyguanosinetriphosphate triphosphohydrolase-like protein from Geobacter sulfurreducens (strain ATCC 51573 / DSM 12127 / PCA).